Consider the following 320-residue polypeptide: Lipoyl synthase (320 aa).

[4Fe-4S] cluster contacts are provided by Cys67, Cys72, Cys78, Cys93, Cys97, Cys100, and Ser307. In terms of domain architecture, Radical SAM core spans Phe79–Glu296.

Belongs to the radical SAM superfamily. Lipoyl synthase family. [4Fe-4S] cluster serves as cofactor.

It localises to the cytoplasm. The catalysed reaction is [[Fe-S] cluster scaffold protein carrying a second [4Fe-4S](2+) cluster] + N(6)-octanoyl-L-lysyl-[protein] + 2 oxidized [2Fe-2S]-[ferredoxin] + 2 S-adenosyl-L-methionine + 4 H(+) = [[Fe-S] cluster scaffold protein] + N(6)-[(R)-dihydrolipoyl]-L-lysyl-[protein] + 4 Fe(3+) + 2 hydrogen sulfide + 2 5'-deoxyadenosine + 2 L-methionine + 2 reduced [2Fe-2S]-[ferredoxin]. The protein operates within protein modification; protein lipoylation via endogenous pathway; protein N(6)-(lipoyl)lysine from octanoyl-[acyl-carrier-protein]: step 2/2. Functionally, catalyzes the radical-mediated insertion of two sulfur atoms into the C-6 and C-8 positions of the octanoyl moiety bound to the lipoyl domains of lipoate-dependent enzymes, thereby converting the octanoylated domains into lipoylated derivatives. The sequence is that of Lipoyl synthase from Haemophilus influenzae (strain PittGG).